Consider the following 279-residue polypeptide: Acetyl-coenzyme A carboxylase carboxyl transferase subunit beta (279 aa).

The CoA carboxyltransferase N-terminal domain maps to 23 to 279 (LWWKCESCGA…LSQILGHLSS (257 aa)). Zn(2+) contacts are provided by C27, C30, C46, and C49. Residues 27–49 (CESCGAMLHKKQVEDHFYTCCEC) form a C4-type zinc finger.

The protein belongs to the AccD/PCCB family. Acetyl-CoA carboxylase is a heterohexamer composed of biotin carboxyl carrier protein (AccB), biotin carboxylase (AccC) and two subunits each of ACCase subunit alpha (AccA) and ACCase subunit beta (AccD). Zn(2+) serves as cofactor.

It is found in the cytoplasm. It carries out the reaction N(6)-carboxybiotinyl-L-lysyl-[protein] + acetyl-CoA = N(6)-biotinyl-L-lysyl-[protein] + malonyl-CoA. It functions in the pathway lipid metabolism; malonyl-CoA biosynthesis; malonyl-CoA from acetyl-CoA: step 1/1. Its function is as follows. Component of the acetyl coenzyme A carboxylase (ACC) complex. Biotin carboxylase (BC) catalyzes the carboxylation of biotin on its carrier protein (BCCP) and then the CO(2) group is transferred by the transcarboxylase to acetyl-CoA to form malonyl-CoA. This is Acetyl-coenzyme A carboxylase carboxyl transferase subunit beta from Prosthecochloris aestuarii (strain DSM 271 / SK 413).